The sequence spans 175 residues: ATP synthase subunit b 2 (175 aa).

Residues 20–40 (LIFWTAVTFVIVLLILKKFAW) traverse the membrane as a helical segment.

Belongs to the ATPase B chain family. As to quaternary structure, F-type ATPases have 2 components, F(1) - the catalytic core - and F(0) - the membrane proton channel. F(1) has five subunits: alpha(3), beta(3), gamma(1), delta(1), epsilon(1). F(0) has four main subunits: a(1), b(2) and c(10-14). The alpha and beta chains form an alternating ring which encloses part of the gamma chain. F(1) is attached to F(0) by a central stalk formed by the gamma and epsilon chains, while a peripheral stalk is formed by the delta and b chains.

It localises to the cell inner membrane. Its function is as follows. F(1)F(0) ATP synthase produces ATP from ADP in the presence of a proton or sodium gradient. F-type ATPases consist of two structural domains, F(1) containing the extramembraneous catalytic core and F(0) containing the membrane proton channel, linked together by a central stalk and a peripheral stalk. During catalysis, ATP synthesis in the catalytic domain of F(1) is coupled via a rotary mechanism of the central stalk subunits to proton translocation. In terms of biological role, component of the F(0) channel, it forms part of the peripheral stalk, linking F(1) to F(0). The sequence is that of ATP synthase subunit b 2 from Prosthecochloris aestuarii (strain DSM 271 / SK 413).